Consider the following 358-residue polypeptide: UDP-N-acetylglucosamine--N-acetylmuramyl-(pentapeptide) pyrophosphoryl-undecaprenol N-acetylglucosamine transferase (358 aa).

Residues T10 to G12, N124, R165, S187, I243, and Q288 contribute to the UDP-N-acetyl-alpha-D-glucosamine site.

Belongs to the glycosyltransferase 28 family. MurG subfamily.

The protein localises to the cell inner membrane. The enzyme catalyses di-trans,octa-cis-undecaprenyl diphospho-N-acetyl-alpha-D-muramoyl-L-alanyl-D-glutamyl-meso-2,6-diaminopimeloyl-D-alanyl-D-alanine + UDP-N-acetyl-alpha-D-glucosamine = di-trans,octa-cis-undecaprenyl diphospho-[N-acetyl-alpha-D-glucosaminyl-(1-&gt;4)]-N-acetyl-alpha-D-muramoyl-L-alanyl-D-glutamyl-meso-2,6-diaminopimeloyl-D-alanyl-D-alanine + UDP + H(+). Its pathway is cell wall biogenesis; peptidoglycan biosynthesis. In terms of biological role, cell wall formation. Catalyzes the transfer of a GlcNAc subunit on undecaprenyl-pyrophosphoryl-MurNAc-pentapeptide (lipid intermediate I) to form undecaprenyl-pyrophosphoryl-MurNAc-(pentapeptide)GlcNAc (lipid intermediate II). In Syntrophotalea carbinolica (strain DSM 2380 / NBRC 103641 / GraBd1) (Pelobacter carbinolicus), this protein is UDP-N-acetylglucosamine--N-acetylmuramyl-(pentapeptide) pyrophosphoryl-undecaprenol N-acetylglucosamine transferase.